A 254-amino-acid chain; its full sequence is 5-keto-D-gluconate 5-reductase (254 aa).

An NADP(+)-binding site is contributed by 13–37 (LITGSAQGIGFLLATGLGKYGAQII). S145 contributes to the substrate binding site. The active-site Proton acceptor is the Y158.

It belongs to the short-chain dehydrogenases/reductases (SDR) family.

It carries out the reaction D-gluconate + NAD(+) = 5-dehydro-D-gluconate + NADH + H(+). The enzyme catalyses D-gluconate + NADP(+) = 5-dehydro-D-gluconate + NADPH + H(+). Its pathway is carbohydrate acid metabolism; L-idonate degradation. Its function is as follows. Catalyzes the reduction of 5-keto-D-gluconate to D-gluconate, using either NADH or NADPH. Is likely involved in an L-idonate degradation pathway that allows E.coli to utilize L-idonate as the sole carbon and energy source. Is also able to catalyze the reverse reaction in vitro, but the D-gluconate oxidation by the enzyme can only proceed with NAD. In Escherichia coli O6:H1 (strain CFT073 / ATCC 700928 / UPEC), this protein is 5-keto-D-gluconate 5-reductase.